We begin with the raw amino-acid sequence, 102 residues long: Small ribosomal subunit protein uS10 (102 aa).

The protein belongs to the universal ribosomal protein uS10 family. In terms of assembly, part of the 30S ribosomal subunit.

Involved in the binding of tRNA to the ribosomes. The protein is Small ribosomal subunit protein uS10 of Geobacillus kaustophilus (strain HTA426).